We begin with the raw amino-acid sequence, 223 residues long: DNA mismatch repair protein MutH (223 aa).

The protein belongs to the MutH family.

The protein resides in the cytoplasm. Sequence-specific endonuclease that cleaves unmethylated GATC sequences. It is involved in DNA mismatch repair. The chain is DNA mismatch repair protein MutH from Shewanella baltica (strain OS185).